The following is a 466-amino-acid chain: Ribulose bisphosphate carboxylase large chain (466 aa).

At K5 the chain carries N6,N6,N6-trimethyllysine. Substrate contacts are provided by N114 and T164. Catalysis depends on K166, which acts as the Proton acceptor. A substrate-binding site is contributed by K168. K192, D194, and E195 together coordinate Mg(2+). An N6-carboxylysine modification is found at K192. Residue H285 is the Proton acceptor of the active site. Substrate contacts are provided by R286, H318, and S370.

The protein belongs to the RuBisCO large chain family. Type I subfamily. In terms of assembly, heterohexadecamer of 8 large chains and 8 small chains; disulfide-linked. The disulfide link is formed within the large subunit homodimers. It depends on Mg(2+) as a cofactor. The disulfide bond which can form in the large chain dimeric partners within the hexadecamer appears to be associated with oxidative stress and protein turnover.

It localises to the plastid. It is found in the chloroplast. It catalyses the reaction 2 (2R)-3-phosphoglycerate + 2 H(+) = D-ribulose 1,5-bisphosphate + CO2 + H2O. The enzyme catalyses D-ribulose 1,5-bisphosphate + O2 = 2-phosphoglycolate + (2R)-3-phosphoglycerate + 2 H(+). Its function is as follows. RuBisCO catalyzes two reactions: the carboxylation of D-ribulose 1,5-bisphosphate, the primary event in carbon dioxide fixation, as well as the oxidative fragmentation of the pentose substrate in the photorespiration process. Both reactions occur simultaneously and in competition at the same active site. The chain is Ribulose bisphosphate carboxylase large chain from Isophysis tasmanica.